A 442-amino-acid chain; its full sequence is ATP-dependent protease ATPase subunit HslU (442 aa).

Residues isoleucine 18, 60-65 (GVGKTE), aspartate 255, glutamate 320, and arginine 392 each bind ATP.

Belongs to the ClpX chaperone family. HslU subfamily. In terms of assembly, a double ring-shaped homohexamer of HslV is capped on each side by a ring-shaped HslU homohexamer. The assembly of the HslU/HslV complex is dependent on binding of ATP.

The protein resides in the cytoplasm. Functionally, ATPase subunit of a proteasome-like degradation complex; this subunit has chaperone activity. The binding of ATP and its subsequent hydrolysis by HslU are essential for unfolding of protein substrates subsequently hydrolyzed by HslV. HslU recognizes the N-terminal part of its protein substrates and unfolds these before they are guided to HslV for hydrolysis. The chain is ATP-dependent protease ATPase subunit HslU from Shewanella putrefaciens (strain CN-32 / ATCC BAA-453).